The primary structure comprises 369 residues: Dihydroorotate dehydrogenase (quinone) (369 aa).

Residues 66 to 70 and T90 contribute to the FMN site; that span reads AGFDK. A substrate-binding site is contributed by K70. Position 115-119 (115-119) interacts with substrate; sequence NRMGF. N143 and N176 together coordinate FMN. N176 is a binding site for substrate. S179 acts as the Nucleophile in catalysis. Residue N181 coordinates substrate. Positions 217 and 245 each coordinate FMN. Position 246 to 247 (246 to 247) interacts with substrate; it reads NT. Residues G271, G300, and 321-322 each bind FMN; that span reads YT.

The protein belongs to the dihydroorotate dehydrogenase family. Type 2 subfamily. As to quaternary structure, monomer. Requires FMN as cofactor.

It localises to the cell membrane. It carries out the reaction (S)-dihydroorotate + a quinone = orotate + a quinol. It participates in pyrimidine metabolism; UMP biosynthesis via de novo pathway; orotate from (S)-dihydroorotate (quinone route): step 1/1. Functionally, catalyzes the conversion of dihydroorotate to orotate with quinone as electron acceptor. This Nocardia farcinica (strain IFM 10152) protein is Dihydroorotate dehydrogenase (quinone).